Reading from the N-terminus, the 269-residue chain is Imidazoleglycerol-phosphate dehydratase 2, chloroplastic (269 aa).

Residues 1–51 constitute a chloroplast transit peptide; it reads MTTAPFLFPSLSRLHSARASSFPKPPVGSGAGVAFPARPYGSSLRLRSSVM. Residues Glu83, 109–117, 135–139, Arg161, and Arg183 each bind substrate; these read HMLDQLASH and HHSNE. Mn(2+) is bound by residues His109, His135, His136, and Glu139. Mn(2+)-binding residues include His207, His231, His232, and Glu235. Substrate-binding positions include 231-239 and 261-263; these read HHIIEATFK and SSK.

Belongs to the imidazoleglycerol-phosphate dehydratase family. It depends on Mn(2+) as a cofactor.

The protein localises to the plastid. It localises to the chloroplast. The catalysed reaction is D-erythro-1-(imidazol-4-yl)glycerol 3-phosphate = 3-(imidazol-4-yl)-2-oxopropyl phosphate + H2O. It functions in the pathway amino-acid biosynthesis; L-histidine biosynthesis; L-histidine from 5-phospho-alpha-D-ribose 1-diphosphate: step 6/9. The chain is Imidazoleglycerol-phosphate dehydratase 2, chloroplastic from Triticum aestivum (Wheat).